We begin with the raw amino-acid sequence, 316 residues long: Pantothenate kinase (316 aa).

95–102 (GSVAVGKS) contacts ATP.

It belongs to the prokaryotic pantothenate kinase family.

It localises to the cytoplasm. It carries out the reaction (R)-pantothenate + ATP = (R)-4'-phosphopantothenate + ADP + H(+). It participates in cofactor biosynthesis; coenzyme A biosynthesis; CoA from (R)-pantothenate: step 1/5. This Shewanella halifaxensis (strain HAW-EB4) protein is Pantothenate kinase.